A 229-amino-acid polypeptide reads, in one-letter code: DNA mismatch repair protein MutH (229 aa).

The protein belongs to the MutH family.

It localises to the cytoplasm. Sequence-specific endonuclease that cleaves unmethylated GATC sequences. It is involved in DNA mismatch repair. The protein is DNA mismatch repair protein MutH of Escherichia coli (strain SMS-3-5 / SECEC).